A 150-amino-acid chain; its full sequence is UPF0208 membrane protein VP2081 (150 aa).

A run of 2 helical transmembrane segments spans residues 42–62 (FGIK…MAFN) and 70–90 (SIVV…WLGA).

The protein belongs to the UPF0208 family.

It localises to the cell inner membrane. The polypeptide is UPF0208 membrane protein VP2081 (Vibrio parahaemolyticus serotype O3:K6 (strain RIMD 2210633)).